Consider the following 105-residue polypeptide: MANTPKTLIAFVFSVIVIISYVHCHTTIASAPSSGEPTTYATGPALSKHSHDNDGICFVTPACFAPGQYEIGCIVYCHESHYKHYKCVNRSCCCYNTDKNASELK.

The signal sequence occupies residues 1–24 (MANTPKTLIAFVFSVIVIISYVHC). 4 cysteine pairs are disulfide-bonded: Cys57–Cys94, Cys63–Cys87, Cys73–Cys92, and Cys77–Cys93.

It belongs to the DEFL family.

It localises to the secreted. The chain is Defensin-like protein 106 from Arabidopsis thaliana (Mouse-ear cress).